The primary structure comprises 56 residues: Serine protease inhibitor Kazal-type 1 (56 aa).

Positions 3 to 56 (PQREATCTSEVSGCPKIYNPVCGTDGITYSNECVLCSENKKRQTPVLIQKSGPC) constitute a Kazal-like domain. Cystine bridges form between Cys9–Cys38, Cys16–Cys35, and Cys24–Cys56.

The protein resides in the secreted. In terms of biological role, serine protease inhibitor which exhibits anti-trypsin activity. In the pancreas, protects against trypsin-catalyzed premature activation of zymogens. In the male reproductive tract, binds to sperm heads where it modulates sperm capacitance by inhibiting calcium uptake and nitrogen oxide (NO) production. This chain is Serine protease inhibitor Kazal-type 1 (SPINK1), found in Sus scrofa (Pig).